The following is a 458-amino-acid chain: Cysteine--tRNA ligase (458 aa).

Residue Cys-33 participates in Zn(2+) binding. The 'HIGH' region motif lies at 35–45 (PTVYDFAHIGN). Zn(2+) contacts are provided by Cys-221, His-246, and Glu-250. Positions 279-283 (KMSKS) match the 'KMSKS' region motif. Lys-282 is an ATP binding site.

The protein belongs to the class-I aminoacyl-tRNA synthetase family. As to quaternary structure, monomer. Zn(2+) is required as a cofactor.

The protein localises to the cytoplasm. The catalysed reaction is tRNA(Cys) + L-cysteine + ATP = L-cysteinyl-tRNA(Cys) + AMP + diphosphate. The protein is Cysteine--tRNA ligase of Rhizobium etli (strain ATCC 51251 / DSM 11541 / JCM 21823 / NBRC 15573 / CFN 42).